The primary structure comprises 758 residues: 5-methyltetrahydropteroyltriglutamate--homocysteine methyltransferase (758 aa).

5-methyltetrahydropteroyltri-L-glutamate contacts are provided by residues 16 to 19 (RELK) and lysine 117. Residues 436-438 (IGS) and glutamate 489 each bind L-homocysteine. Residues 436–438 (IGS) and glutamate 489 each bind L-methionine. Residues 520–521 (RC) and tryptophan 566 each bind 5-methyltetrahydropteroyltri-L-glutamate. L-homocysteine is bound at residue aspartate 604. Aspartate 604 lines the L-methionine pocket. Position 610 (glutamate 610) interacts with 5-methyltetrahydropteroyltri-L-glutamate. Residues histidine 646, cysteine 648, and glutamate 670 each contribute to the Zn(2+) site. The active-site Proton donor is histidine 699. Cysteine 731 is a Zn(2+) binding site.

It belongs to the vitamin-B12 independent methionine synthase family. Requires Zn(2+) as cofactor.

The enzyme catalyses 5-methyltetrahydropteroyltri-L-glutamate + L-homocysteine = tetrahydropteroyltri-L-glutamate + L-methionine. The protein operates within amino-acid biosynthesis; L-methionine biosynthesis via de novo pathway; L-methionine from L-homocysteine (MetE route): step 1/1. Functionally, catalyzes the transfer of a methyl group from 5-methyltetrahydrofolate to homocysteine resulting in methionine formation. This Ruthia magnifica subsp. Calyptogena magnifica protein is 5-methyltetrahydropteroyltriglutamate--homocysteine methyltransferase.